We begin with the raw amino-acid sequence, 293 residues long: 4-diphosphocytidyl-2-C-methyl-D-erythritol kinase (293 aa).

The active site involves K16. Residue 99–109 (PMGAGLGGGSS) participates in ATP binding. D141 is a catalytic residue.

Belongs to the GHMP kinase family. IspE subfamily.

It catalyses the reaction 4-CDP-2-C-methyl-D-erythritol + ATP = 4-CDP-2-C-methyl-D-erythritol 2-phosphate + ADP + H(+). It functions in the pathway isoprenoid biosynthesis; isopentenyl diphosphate biosynthesis via DXP pathway; isopentenyl diphosphate from 1-deoxy-D-xylulose 5-phosphate: step 3/6. Catalyzes the phosphorylation of the position 2 hydroxy group of 4-diphosphocytidyl-2C-methyl-D-erythritol. This is 4-diphosphocytidyl-2-C-methyl-D-erythritol kinase from Burkholderia pseudomallei (strain 668).